We begin with the raw amino-acid sequence, 253 residues long: NADH-quinone oxidoreductase subunit C (253 aa).

Disordered stretches follow at residues 1-33 and 234-253; these read MSPD…DTEP and IPVE…RAYS.

This sequence belongs to the complex I 30 kDa subunit family. As to quaternary structure, NDH-1 is composed of 14 different subunits. Subunits NuoB, C, D, E, F, and G constitute the peripheral sector of the complex.

It localises to the cell membrane. It carries out the reaction a quinone + NADH + 5 H(+)(in) = a quinol + NAD(+) + 4 H(+)(out). Functionally, NDH-1 shuttles electrons from NADH, via FMN and iron-sulfur (Fe-S) centers, to quinones in the respiratory chain. The immediate electron acceptor for the enzyme in this species is believed to be a menaquinone. Couples the redox reaction to proton translocation (for every two electrons transferred, four hydrogen ions are translocated across the cytoplasmic membrane), and thus conserves the redox energy in a proton gradient. The chain is NADH-quinone oxidoreductase subunit C from Nocardia farcinica (strain IFM 10152).